The following is a 288-amino-acid chain: Light-independent protochlorophyllide reductase iron-sulfur ATP-binding protein (288 aa).

Residues 10–15 (GIGKST) and lysine 39 each bind ATP. Residue serine 14 coordinates Mg(2+). Residues cysteine 95 and cysteine 129 each coordinate [4Fe-4S] cluster. Position 180-181 (180-181 (NR)) interacts with ATP.

Belongs to the NifH/BchL/ChlL family. In terms of assembly, homodimer. Protochlorophyllide reductase is composed of three subunits; ChlL, ChlN and ChlB. It depends on [4Fe-4S] cluster as a cofactor.

The enzyme catalyses chlorophyllide a + oxidized 2[4Fe-4S]-[ferredoxin] + 2 ADP + 2 phosphate = protochlorophyllide a + reduced 2[4Fe-4S]-[ferredoxin] + 2 ATP + 2 H2O. It functions in the pathway porphyrin-containing compound metabolism; chlorophyll biosynthesis (light-independent). Its function is as follows. Component of the dark-operative protochlorophyllide reductase (DPOR) that uses Mg-ATP and reduced ferredoxin to reduce ring D of protochlorophyllide (Pchlide) to form chlorophyllide a (Chlide). This reaction is light-independent. The L component serves as a unique electron donor to the NB-component of the complex, and binds Mg-ATP. The chain is Light-independent protochlorophyllide reductase iron-sulfur ATP-binding protein from Nostoc punctiforme (strain ATCC 29133 / PCC 73102).